A 480-amino-acid polypeptide reads, in one-letter code: Type VI lipase adapter protein Tla3 (480 aa).

The disordered stretch occupies residues 410–458 (ISSPTPGKKPVHDPFGVDLLPQTASGDGPPPSADPVAPASRLTTRLPPG).

As to quaternary structure, interacts with the Tle3 toxin on one side and with the H2-T6SS component VgrG2b on the other side.

Its subcellular location is the cytoplasm. Its function is as follows. Adapter protein that targets and loads the Tle3 toxin onto the H2 type VI secretion system (H2-T6SS) machinery through an interaction with the TTR domain of VgrG2b. Seems specific for Tle3. This chain is Type VI lipase adapter protein Tla3, found in Pseudomonas aeruginosa (strain ATCC 15692 / DSM 22644 / CIP 104116 / JCM 14847 / LMG 12228 / 1C / PRS 101 / PAO1).